The chain runs to 464 residues: Putative F-box/LRR-repeat protein At3g59160 (464 aa).

The F-box domain maps to 12 to 60; it reads KDMINDLPDALLCHVLSYLTTKEAASTSLLSRRWRYLLAFVPNLEFDDS. LRR repeat units lie at residues 172-198, 200-225, 233-258, 336-367, 368-393, and 408-433; these read TLKI…HLES, MFDE…VLHH, SCSV…GMHE, VLCL…TIQS, TPKV…VFQG, and KIEK…VLHY.

In Arabidopsis thaliana (Mouse-ear cress), this protein is Putative F-box/LRR-repeat protein At3g59160.